The primary structure comprises 160 residues: Transcription elongation factor GreA (160 aa).

Residues 1-72 (MAEKTYVMTL…QIQILETKIR (72 aa)) adopt a coiled-coil conformation.

The protein belongs to the GreA/GreB family.

Necessary for efficient RNA polymerase transcription elongation past template-encoded arresting sites. The arresting sites in DNA have the property of trapping a certain fraction of elongating RNA polymerases that pass through, resulting in locked ternary complexes. Cleavage of the nascent transcript by cleavage factors such as GreA or GreB allows the resumption of elongation from the new 3'terminus. GreA releases sequences of 2 to 3 nucleotides. This Streptococcus thermophilus (strain CNRZ 1066) protein is Transcription elongation factor GreA.